Here is a 521-residue protein sequence, read N- to C-terminus: Bifunctional purine biosynthesis protein PurH (521 aa).

Positions 1 to 145 constitute an MGS-like domain; it reads MIKQALISVS…KNHRDVTVVV (145 aa).

It belongs to the PurH family.

The enzyme catalyses (6R)-10-formyltetrahydrofolate + 5-amino-1-(5-phospho-beta-D-ribosyl)imidazole-4-carboxamide = 5-formamido-1-(5-phospho-D-ribosyl)imidazole-4-carboxamide + (6S)-5,6,7,8-tetrahydrofolate. It catalyses the reaction IMP + H2O = 5-formamido-1-(5-phospho-D-ribosyl)imidazole-4-carboxamide. Its pathway is purine metabolism; IMP biosynthesis via de novo pathway; 5-formamido-1-(5-phospho-D-ribosyl)imidazole-4-carboxamide from 5-amino-1-(5-phospho-D-ribosyl)imidazole-4-carboxamide (10-formyl THF route): step 1/1. It functions in the pathway purine metabolism; IMP biosynthesis via de novo pathway; IMP from 5-formamido-1-(5-phospho-D-ribosyl)imidazole-4-carboxamide: step 1/1. The protein is Bifunctional purine biosynthesis protein PurH of Burkholderia orbicola (strain MC0-3).